Here is a 912-residue protein sequence, read N- to C-terminus: Protein translocase subunit SecA (912 aa).

ATP-binding positions include Gln87, 105–109 (GEGKT), and Asp508. A disordered region spans residues 869-912 (EQMQGGNAPVPVSQVTRDEPKVGRNDPCPCGSGKKYKHCHGQLS). Cys896, Cys898, Cys907, and His908 together coordinate Zn(2+). Basic residues predominate over residues 902–912 (KKYKHCHGQLS).

The protein belongs to the SecA family. As to quaternary structure, monomer and homodimer. Part of the essential Sec protein translocation apparatus which comprises SecA, SecYEG and auxiliary proteins SecDF-YajC and YidC. It depends on Zn(2+) as a cofactor.

The protein resides in the cell inner membrane. The protein localises to the cytoplasm. The enzyme catalyses ATP + H2O + cellular proteinSide 1 = ADP + phosphate + cellular proteinSide 2.. Functionally, part of the Sec protein translocase complex. Interacts with the SecYEG preprotein conducting channel. Has a central role in coupling the hydrolysis of ATP to the transfer of proteins into and across the cell membrane, serving both as a receptor for the preprotein-SecB complex and as an ATP-driven molecular motor driving the stepwise translocation of polypeptide chains across the membrane. In Xanthomonas axonopodis pv. citri (strain 306), this protein is Protein translocase subunit SecA.